A 413-amino-acid polypeptide reads, in one-letter code: Peptidase T (413 aa).

A Zn(2+)-binding site is contributed by His81. Asp83 is a catalytic residue. Asp143 serves as a coordination point for Zn(2+). The active-site Proton acceptor is the Glu178. Zn(2+) contacts are provided by Glu179, Asp201, and His383.

This sequence belongs to the peptidase M20B family. It depends on Zn(2+) as a cofactor.

It localises to the cytoplasm. It carries out the reaction Release of the N-terminal residue from a tripeptide.. In terms of biological role, cleaves the N-terminal amino acid of tripeptides. The protein is Peptidase T of Lactococcus lactis subsp. cremoris (Streptococcus cremoris).